The sequence spans 208 residues: Protein-L-isoaspartate O-methyltransferase (208 aa).

Residue S59 is part of the active site.

It belongs to the methyltransferase superfamily. L-isoaspartyl/D-aspartyl protein methyltransferase family.

It localises to the cytoplasm. The enzyme catalyses [protein]-L-isoaspartate + S-adenosyl-L-methionine = [protein]-L-isoaspartate alpha-methyl ester + S-adenosyl-L-homocysteine. Functionally, catalyzes the methyl esterification of L-isoaspartyl residues in peptides and proteins that result from spontaneous decomposition of normal L-aspartyl and L-asparaginyl residues. It plays a role in the repair and/or degradation of damaged proteins. This chain is Protein-L-isoaspartate O-methyltransferase, found in Citrobacter koseri (strain ATCC BAA-895 / CDC 4225-83 / SGSC4696).